The following is a 669-amino-acid chain: Filensin (669 aa).

Residues 1 to 33 (MYRRSYVFQARQERYERAQPAGPAAQPGGTAPG) are head. S5 bears the Phosphoserine mark. One can recognise an IF rod domain in the interval 33–318 (GLAALQALGE…RIIEIEGSRL (286 aa)). A coil 1A region spans residues 34–68 (LAALQALGERVAVQVQRARALQQRHAGLRRQLDAF). Position 35 is an N-acetylalanine (A35). Residues 69-77 (QRLGEQPGP) are linker 1. The tract at residues 78–177 (EDALARHVEA…RYKKNLLEIQ (100 aa)) is coil 1B. The interval 178-194 (TYITVLQQIVQTAPQVS) is linker 12. The interval 195-318 (LVTGMRESGL…RIIEIEGSRL (124 aa)) is coil 2. The interval 319–669 (SSVFIETPIS…GEKSLPDTRA (351 aa)) is tail. S339 carries the post-translational modification Phosphoserine. Disordered stretches follow at residues 380 to 435 (VEET…GGQI), 449 to 468 (RVSGHKEPEPEPPTDLFTKG), and 505 to 618 (HHDG…KALS). Residues 408–417 (SQPGAGGGHG) show a composition bias toward gly residues. G432 carries the N-myristoyl glycine lipid modification. At S513 the chain carries Phosphoserine. The segment covering 545–570 (NGLRAKEPKDLEEKDDDGKKEAEGSR) has biased composition (basic and acidic residues). Residues 583-593 (PSTSHSQTSGS) are compositionally biased toward polar residues. At T585 the chain carries Phosphothreonine.

This sequence belongs to the intermediate filament family. Part of a complex required for lens intermediate filament formation composed of BFSP1, BFSP2 and CRYAA. Identified in a complex that contains VIM, EZR, AHNAK, BFSP1, BFSP2, ANK2, PLEC, PRX and spectrin. Found in a complex composed of PPL (via C-terminal linker domain), BFSP1 and BFSP2 in the retinal lens. Within the complex interacts with BFSP2. Interacts (via C-terminus) with MIP (via C-terminus) in aged lens fiber cells. In terms of processing, proteolytically cleaved during lens cell fiber differentiation with increased fragmentation as fiber cell age increases. Myristoylated at Gly-432 following proteolytic cleavage at Asp-431. Post-translationally, acetylated at Ala-35 following proteolytic cleavage at Leu-34. In terms of tissue distribution, detected in eye lens fiber cells (at protein level). Expressed in retinal lens epithelial cells (at protein level).

Its subcellular location is the cell membrane. It is found in the cytoplasm. It localises to the cytoskeleton. The protein resides in the cell cortex. In terms of biological role, required for the correct formation of lens intermediate filaments as part of a complex composed of BFSP1, BFSP2 and CRYAA. Involved in altering the calcium regulation of MIP water permeability. The protein is Filensin (Bfsp1) of Mus musculus (Mouse).